We begin with the raw amino-acid sequence, 431 residues long: Fumarylacetoacetase (431 aa).

Asp133 is a Ca(2+) binding site. Position 135 (Tyr135) interacts with substrate. His140 functions as the Proton acceptor in the catalytic mechanism. Arg149 provides a ligand contact to substrate. Residues Glu209, Glu211, and Asp243 each contribute to the Ca(2+) site. Asp243 is a Mg(2+) binding site. Gln250 and Tyr254 together coordinate substrate. Lys263 and Thr267 together coordinate Mg(2+). Thr362 is a substrate binding site.

Belongs to the FAH family. Ca(2+) is required as a cofactor. Requires Mg(2+) as cofactor.

It catalyses the reaction 4-fumarylacetoacetate + H2O = acetoacetate + fumarate + H(+). It functions in the pathway amino-acid degradation; L-phenylalanine degradation; acetoacetate and fumarate from L-phenylalanine: step 6/6. Use of phenylalanine and phenylacetate as a carbon source. This chain is Fumarylacetoacetase (fahA), found in Emericella nidulans (strain FGSC A4 / ATCC 38163 / CBS 112.46 / NRRL 194 / M139) (Aspergillus nidulans).